Reading from the N-terminus, the 592-residue chain is Frizzled-5 (592 aa).

The first 38 residues, 1–38 (MRKPADEHHFTMETSGMHLVGFWLHVLLLFQLSGLGDS), serve as a signal peptide directing secretion. Over 39 to 248 (ASKDIVCEPI…QDERTFTTFW (210 aa)) the chain is Extracellular. An FZ domain is found at 40–161 (SKDIVCEPIT…GDTDRLCMDR (122 aa)). 5 disulfide bridges follow: Cys-45–Cys-106, Cys-53–Cys-99, Cys-90–Cys-128, Cys-117–Cys-158, and Cys-121–Cys-145. The segment at 162-192 (NSSETTTLSPPFPKPTPKGTPRHRATAKSAP) is disordered. The chain crosses the membrane as a helical span at residues 249 to 269 (IGLWSVLCFVSTFTTVATFLI). The Cytoplasmic segment spans residues 270–280 (DMERFKYPERP). A helical membrane pass occupies residues 281–301 (IIFLAACYLFVSLGYIVRLLA). Residues 302 to 327 (GHERVACEGTGDQQHILYDTTGPALC) lie on the Extracellular side of the membrane. The chain crosses the membrane as a helical span at residues 328–348 (TLVFLLIYFFGMASSIWWVVL). The Cytoplasmic segment spans residues 349–370 (SFTWFLAAGMKWGNEAIAGYSQ). Residues 371 to 391 (YFHLAAWLVPSVKSIAVLALS) traverse the membrane as a helical segment. Residues 392-414 (SVDGDPVAGICYVGNQSLEGLRG) lie on the Extracellular side of the membrane. The helical transmembrane segment at 415–435 (FVLAPLVVYLFTGSLFLLAGF) threads the bilayer. Topologically, residues 436–461 (VSLFRIRSVIKQGGTKTDKLEKLMIR) are cytoplasmic. The chain crosses the membrane as a helical span at residues 462–482 (IGLFTVLYTVPATIVVACLVY). Over 483-512 (EQHYRPSWERALACSCPSERQRLGMGPDYA) the chain is Extracellular. The helical transmembrane segment at 513–533 (VFMLKYFMCLVVGITSGVWIW) threads the bilayer. Residues 534 to 592 (SGKTLESWRRFIARYVPCRTRKPPVSASSMYSEASTALTARAGTAPTGTYHKSAPSSHV) lie on the Cytoplasmic side of the membrane.

This sequence belongs to the G-protein coupled receptor Fz/Smo family.

The protein localises to the cell membrane. The protein resides in the golgi apparatus membrane. Its subcellular location is the synapse. It is found in the perikaryon. It localises to the cell projection. The protein localises to the dendrite. The protein resides in the axon. In terms of biological role, receptor for Wnt proteins. Following binding, activates the canonical Wnt/beta-catenin signaling pathway. Also activates wnt non-canonical signaling. In neurons, activation of the Wnt pathway promotes formation of synapses. May be involved in transduction and intercellular transmission of polarity information during tissue morphogenesis and/or in differentiated tissues. Plays a role in early eye development, possibly through wnt non-canonical signaling. As a receptor for wnt11, promotes eye formation, at least partially, by antagonizing the Wnt/beta-catenin pathway. In addition, promotes coherence of eye field cells, potentially contributing to the coordinated morphogenetic behaviors of cells in the nascent eye field. The protein is Frizzled-5 (fzd5) of Danio rerio (Zebrafish).